Here is a 117-residue protein sequence, read N- to C-terminus: Large ribosomal subunit protein uL18 (117 aa).

This sequence belongs to the universal ribosomal protein uL18 family. Part of the 50S ribosomal subunit; part of the 5S rRNA/L5/L18/L25 subcomplex. Contacts the 5S and 23S rRNAs.

Functionally, this is one of the proteins that bind and probably mediate the attachment of the 5S RNA into the large ribosomal subunit, where it forms part of the central protuberance. In Colwellia psychrerythraea (strain 34H / ATCC BAA-681) (Vibrio psychroerythus), this protein is Large ribosomal subunit protein uL18.